The chain runs to 1515 residues: DNA topoisomerase 2-binding protein 1 (1515 aa).

2 BRCT domains span residues 101 to 189 (VYNM…KYTD) and 195 to 284 (FKCP…IYKA). Residue threonine 298 is modified to Phosphothreonine. 3 consecutive BRCT domains span residues 353–443 (APED…SYIH), 551–636 (REEG…SNPL), and 644–741 (SGVT…HFLV). An interaction with CIP2A region spans residues 759–893 (VSSNPDLPAH…TDSHSASPQL (135 aa)). A Phosphothreonine modification is found at threonine 782. The interval 799–826 (SQQRGQDPTFPPVRQPLTKEPSLHLDTP) is disordered. Threonine 851 is modified (phosphothreonine). 5 positions are modified to phosphoserine: serine 862, serine 863, serine 866, serine 888, and serine 890. The segment covering 880–891 (SSRNTDSHSASP) has biased composition (polar residues). The disordered stretch occupies residues 880–901 (SSRNTDSHSASPQLKGAHLEEE). In terms of domain architecture, BRCT 6 spans 902–993 (ETRKPLDSVV…KHLPESLYPH (92 aa)). The interval 1020-1055 (VSASKDDGPDHLSVEGNETNTMGTNDKESPLLNGSG) is disordered. Basic and acidic residues predominate over residues 1023 to 1032 (SKDDGPDHLS). Threonine 1064 carries the post-translational modification Phosphothreonine. Positions 1097-1116 (SRSSCNSASSTPDSARSVRS) are enriched in low complexity. Disordered stretches follow at residues 1097 to 1119 (SRSSCNSASSTPDSARSVRSGRS), 1203 to 1255 (VTQA…TQEE), and 1491 to 1515 (KKGGPGLPQKRKTPAENVVKRPRVH). Residues 1217 to 1229 (PPVAERPLIPEPQ) are compositionally biased toward pro residues. A BRCT 7 domain is found at 1255–1347 (ETHRKVKKQY…RFVQEEDYEW (93 aa)). Residues 1510-1513 (KRPR) carry the Nuclear localization signal motif.

This sequence belongs to the TOPBP1 family. In terms of assembly, interacts (via BRCT domains 1 and 2) with (phosphorylated) MDC1; promoting TOPBP1 recruitment to DNA damage sites during mitosis. Interacts (via BRCT domains 7 and 8) with (autophosphorylated) ATR; promoting activation of ATR. Interacts (via BRCT domains 7 and 8) with (phosphorylated) POLQ; specifically binds POLQ phosphorylated by PLK1, promoting POLQ recruitment to DNA damage sites. Interacts (via BRCT domains 1 and 2) with (phosphorylated) RAD9A. Interacts (via BRCT domain 2) with (phosphorylated) TP53BP1. Interacts (via BRCT domain 2) with (phosphorylated) HTATSF1. Interacts (via BRCT domains 7 and 8) with (phosphorylated) RAD51; promoting RAD51 recruitment to damaged chromatin. Interacts with CIP2A; forming the CIP2A-TOPBP1 complex. Interacts with POLE. Interacts with UBR5. Interacts with E2F1. Interacts with PML. Interacts with SMARCA2. Interacts with SMARCA4. Interacts with RHNO1. May interact with TOP2B. Interacts with TICRR. Interacts with HELB. Phosphorylated on serine and threonine residues in response to X-ray irradiation. In terms of processing, ubiquitinated and degraded by the proteasome. X-ray irradiation reduces ubiquitination. Deubiquitinated by USP13; leading to TOPBP1 stabilizion and activation of the ATR-TOPBP1 axis pathway. Highly expressed in testis.

The protein localises to the nucleus. It localises to the chromosome. The protein resides in the cytoplasm. It is found in the cytoskeleton. Its subcellular location is the microtubule organizing center. The protein localises to the centrosome. It localises to the spindle pole. Scaffold protein that acts as a key protein-protein adapter in DNA replication and DNA repair. Composed of multiple BRCT domains, which specifically recognize and bind phosphorylated proteins, bringing proteins together into functional combinations. Required for DNA replication initiation but not for the formation of pre-replicative complexes or the elongation stages. Necessary for the loading of replication factors onto chromatin, including GMNC, CDC45, DNA polymerases and components of the GINS complex. Plays a central role in DNA repair by bridging proteins and promoting recruitment of proteins to DNA damage sites. Involved in double-strand break (DSB) repair via homologous recombination in S-phase by promoting the exchange between the DNA replication factor A (RPA) complex and RAD51. Mechanistically, TOPBP1 is recruited to DNA damage sites in S-phase via interaction with phosphorylated HTATSF1, and promotes the loading of RAD51, thereby facilitating RAD51 nucleofilaments formation and RPA displacement, followed by homologous recombination. Involved in microhomology-mediated end-joining (MMEJ) DNA repair by promoting recruitment of polymerase theta (POLQ) to DNA damage sites during mitosis. MMEJ is an alternative non-homologous end-joining (NHEJ) machinery that takes place during mitosis to repair DSBs in DNA that originate in S-phase. Recognizes and binds POLQ phosphorylated by PLK1, enabling its recruitment to DSBs for subsequent repair. Involved in G1 DNA damage checkpoint by acting as a molecular adapter that couples TP53BP1 and the 9-1-1 complex. In response to DNA damage, triggers the recruitment of checkpoint signaling proteins on chromatin, which activate the CHEK1 signaling pathway and block S-phase progression. Acts as an activator of the kinase activity of ATR. Also required for chromosomal stability when DSBs occur during mitosis by forming filamentous assemblies that bridge MDC1 and tether broken chromosomes during mitosis. Together with CIP2A, plays an essential role in the response to genome instability generated by the presence of acentric chromosome fragments derived from shattered chromosomes within micronuclei. Micronuclei, which are frequently found in cancer cells, consist of chromatin surrounded by their own nuclear membrane: following breakdown of the micronuclear envelope, a process associated with chromothripsis, the CIP2A-TOPBP1 complex tethers chromosome fragments during mitosis to ensure clustered segregation of the fragments to a single daughter cell nucleus, facilitating re-ligation with limited chromosome scattering and loss. Recruits the SWI/SNF chromatin remodeling complex to E2F1-responsive promoters, thereby down-regulating E2F1 activity and inhibiting E2F1-dependent apoptosis during G1/S transition and after DNA damage. This chain is DNA topoisomerase 2-binding protein 1, found in Mus musculus (Mouse).